The following is a 148-amino-acid chain: Pseudoazurin (148 aa).

The N-terminal stretch at 1–25 is a signal peptide; sequence MMIFRALIAAATLAIAIATTLPAAA. One can recognise a Plastocyanin-like domain in the interval 30–118; that stretch reads VKMLNSGPGG…MGMVALVVVG (89 aa). Cu cation-binding residues include His65, Cys103, His106, and Met111.

Requires Cu cation as cofactor.

It is found in the periplasm. This Methylorubrum extorquens (strain ATCC 14718 / DSM 1338 / JCM 2805 / NCIMB 9133 / AM1) (Methylobacterium extorquens) protein is Pseudoazurin.